We begin with the raw amino-acid sequence, 370 residues long: tRNA-specific 2-thiouridylase MnmA (370 aa).

ATP is bound by residues 9 to 16 (GLSGGVDS) and methionine 35. The tract at residues 95-97 (NPD) is interaction with target base in tRNA. The active-site Nucleophile is cysteine 100. Cysteine 100 and cysteine 198 form a disulfide bridge. ATP is bound at residue glycine 124. The interval 148–150 (KDQ) is interaction with tRNA. Cysteine 198 functions as the Cysteine persulfide intermediate in the catalytic mechanism. Residues 316 to 317 (RY) are interaction with tRNA.

This sequence belongs to the MnmA/TRMU family.

Its subcellular location is the cytoplasm. It carries out the reaction S-sulfanyl-L-cysteinyl-[protein] + uridine(34) in tRNA + AH2 + ATP = 2-thiouridine(34) in tRNA + L-cysteinyl-[protein] + A + AMP + diphosphate + H(+). Its function is as follows. Catalyzes the 2-thiolation of uridine at the wobble position (U34) of tRNA, leading to the formation of s(2)U34. The sequence is that of tRNA-specific 2-thiouridylase MnmA from Acidovorax ebreus (strain TPSY) (Diaphorobacter sp. (strain TPSY)).